A 298-amino-acid polypeptide reads, in one-letter code: Tyrosine recombinase XerC (298 aa).

In terms of domain architecture, Core-binding (CB) spans 1–84 (MNHIQEAFLN…TLRTFYEYWM (84 aa)). One can recognise a Tyr recombinase domain in the interval 105-286 (YLPQFFYEEE…SNQQLRKVYL (182 aa)). Active-site residues include R145, K169, H238, R241, and H264. The active-site O-(3'-phospho-DNA)-tyrosine intermediate is Y273.

The protein belongs to the 'phage' integrase family. XerC subfamily. In terms of assembly, forms a cyclic heterotetrameric complex composed of two molecules of XerC and two molecules of XerD.

It localises to the cytoplasm. Functionally, site-specific tyrosine recombinase, which acts by catalyzing the cutting and rejoining of the recombining DNA molecules. The XerC-XerD complex is essential to convert dimers of the bacterial chromosome into monomers to permit their segregation at cell division. It also contributes to the segregational stability of plasmids. The chain is Tyrosine recombinase XerC from Staphylococcus aureus (strain Mu3 / ATCC 700698).